Reading from the N-terminus, the 205-residue chain is Recombination protein RecR (205 aa).

A C4-type zinc finger spans residues 64–79 (CRRCFNITVDELCPIC). The 96-residue stretch at 87–182 (TKICVVEEPL…RVTRPARGLP (96 aa)) folds into the Toprim domain.

It belongs to the RecR family.

Functionally, may play a role in DNA repair. It seems to be involved in an RecBC-independent recombinational process of DNA repair. It may act with RecF and RecO. The polypeptide is Recombination protein RecR (Chloroflexus aggregans (strain MD-66 / DSM 9485)).